The primary structure comprises 176 residues: Lipoprotein signal peptidase (176 aa).

Helical transmembrane passes span 26-46 (LWMA…IVIV), 60-80 (FFNL…ADAG), 82-102 (WQRW…VWLL), and 107-127 (GQKL…GNVV). Active-site residues include Asp-137 and Asp-155. A helical transmembrane segment spans residues 147–167 (HWPAFNVADCAITVGAVLLIV).

The protein belongs to the peptidase A8 family.

It localises to the cell inner membrane. It catalyses the reaction Release of signal peptides from bacterial membrane prolipoproteins. Hydrolyzes -Xaa-Yaa-Zaa-|-(S,diacylglyceryl)Cys-, in which Xaa is hydrophobic (preferably Leu), and Yaa (Ala or Ser) and Zaa (Gly or Ala) have small, neutral side chains.. Its pathway is protein modification; lipoprotein biosynthesis (signal peptide cleavage). Functionally, this protein specifically catalyzes the removal of signal peptides from prolipoproteins. This is Lipoprotein signal peptidase from Cupriavidus pinatubonensis (strain JMP 134 / LMG 1197) (Cupriavidus necator (strain JMP 134)).